Consider the following 583-residue polypeptide: Malonate--CoA ligase ACSF3, mitochondrial (583 aa).

The N-terminal 27 residues, 1-27 (MPPHLALPFRRLFWSLASSQLIPRRHR), are a transit peptide targeting the mitochondrion. Residues 202–210 (TSGTTGRPK), Asp-455, Arg-469, and Lys-561 contribute to the ATP site.

This sequence belongs to the ATP-dependent AMP-binding enzyme family.

It localises to the mitochondrion. The catalysed reaction is tetracosanoate + ATP + CoA = tetracosanoyl-CoA + AMP + diphosphate. It carries out the reaction malonate + ATP + CoA = malonyl-CoA + AMP + diphosphate. Its function is as follows. Catalyzes the initial reaction in intramitochondrial fatty acid synthesis, by activating malonate and methylmalonate, but not acetate, into their respective CoA thioester. May have some preference toward very-long-chain substrates. The polypeptide is Malonate--CoA ligase ACSF3, mitochondrial (Mus musculus (Mouse)).